The primary structure comprises 689 residues: DNA topoisomerase 1 (689 aa).

One can recognise a Toprim domain in the interval 3–113 (DNLVIVESPA…KENRVVFNEI (111 aa)). Positions 9 and 82 each coordinate Mg(2+). In terms of domain architecture, Topo IA-type catalytic spans 129-557 (EMDLVDAQQA…FYNSFKQDVE (429 aa)). The interval 163 to 168 (SAGRVQ) is interaction with DNA. Residue Tyr298 is the O-(5'-phospho-DNA)-tyrosine intermediate of the active site. 3 C4-type zinc fingers span residues 577-603 (CEVCGSPMVIKMGRYGKFMACSNFPDC), 617-645 (CPKCNEGDVVERKSKKNRIFYGCSRYPEC), and 658-681 (CPKCHHYLVNKKKGKSSQVVCSNC).

The protein belongs to the type IA topoisomerase family. In terms of assembly, monomer. Mg(2+) is required as a cofactor.

The catalysed reaction is ATP-independent breakage of single-stranded DNA, followed by passage and rejoining.. In terms of biological role, releases the supercoiling and torsional tension of DNA, which is introduced during the DNA replication and transcription, by transiently cleaving and rejoining one strand of the DNA duplex. Introduces a single-strand break via transesterification at a target site in duplex DNA. The scissile phosphodiester is attacked by the catalytic tyrosine of the enzyme, resulting in the formation of a DNA-(5'-phosphotyrosyl)-enzyme intermediate and the expulsion of a 3'-OH DNA strand. The free DNA strand then undergoes passage around the unbroken strand, thus removing DNA supercoils. Finally, in the religation step, the DNA 3'-OH attacks the covalent intermediate to expel the active-site tyrosine and restore the DNA phosphodiester backbone. This chain is DNA topoisomerase 1, found in Staphylococcus epidermidis (strain ATCC 35984 / DSM 28319 / BCRC 17069 / CCUG 31568 / BM 3577 / RP62A).